We begin with the raw amino-acid sequence, 198 residues long: Single-stranded DNA cytosine deaminase (198 aa).

The short motif at 1–30 is the Bipartite nuclear localization signal element; sequence MDSLLMKQKKFLYHFKNVRWAKGRHETYLC. The segment at 2-26 is interaction with SUPT6H; it reads DSLLMKQKKFLYHFKNVRWAKGRHE. The CMP/dCMP-type deaminase domain occupies 23 to 129; sequence GRHETYLCYV…KAEPEGLRRL (107 aa). A Phosphothreonine; by PKA modification is found at T27. Position 38 is a phosphoserine; by PKA (S38). The tract at residues 39–42 is important for interaction with CTNNBL1; that stretch reads ATSC. H56 is a Zn(2+) binding site. The Proton donor role is filled by E58. Zn(2+)-binding residues include C87 and C90. The segment at 88–116 is required for interaction with RNF126; it reads YDCARHVAEFLRWNPNLSLRIFTARLYFC. Positions 183–198 match the Nuclear export signal motif; it reads LYEVDDLRDAFRMLGF.

Belongs to the cytidine and deoxycytidylate deaminase family. As to quaternary structure, interacts with CTNNBL1; the interaction is important for the immunoglobulin switch activity of AICDA. Interacts (via its NLS) with KPNA1. Interacts with PKA/PRKACA and PRKAR1A/PKR1. Interacts with SUPT6H, TRIM28 and NCL. Directly interacts with MCM3AP/GANP; this interaction may favor AICDA recruitment to immunoglobulin variable region genes, hence promoting somatic hypermutations. Zn(2+) serves as cofactor. Post-translationally, ser-38 is the major site whereas Thr-27 is the minor site of phosphorylation. Phosphorylation regulates its class-switch recombination activity. In terms of processing, probably monoubiquitinated on several residues by RNF126. As to expression, expressed in germinal center B-cells (at protein level).

It is found in the nucleus. The protein localises to the cytoplasm. It catalyses the reaction a 2'-deoxycytidine in single-stranded DNA + H2O + H(+) = a 2'-deoxyuridine in single-stranded DNA + NH4(+). Its function is as follows. Single-stranded DNA-specific cytidine deaminase. Involved in somatic hypermutation (SHM), gene conversion, and class-switch recombination (CSR) in B-lymphocytes by deaminating C to U during transcription of Ig-variable (V) and Ig-switch (S) region DNA. Required for several crucial steps of B-cell terminal differentiation necessary for efficient antibody responses. May also play a role in the epigenetic regulation of gene expression by participating in DNA demethylation. The protein is Single-stranded DNA cytosine deaminase (Aicda) of Mus musculus (Mouse).